We begin with the raw amino-acid sequence, 142 residues long: Large ribosomal subunit protein uL13 (142 aa).

Belongs to the universal ribosomal protein uL13 family. In terms of assembly, part of the 50S ribosomal subunit.

This protein is one of the early assembly proteins of the 50S ribosomal subunit, although it is not seen to bind rRNA by itself. It is important during the early stages of 50S assembly. The sequence is that of Large ribosomal subunit protein uL13 from Shewanella putrefaciens (strain CN-32 / ATCC BAA-453).